A 298-amino-acid chain; its full sequence is Cyclin-C (298 aa).

The Cyclin N-terminal domain maps to 46-162 (NFITAVATEC…ILDCCLVVHH (117 aa)). The disordered stretch occupies residues 278–298 (KLPKPNTPIPPPQQQQSSYHM).

Belongs to the cyclin family. Cyclin C subfamily. In terms of assembly, component of the Mediator complex.

It is found in the nucleus. In terms of biological role, component of the Mediator complex, a coactivator involved in regulated gene transcription of nearly all RNA polymerase II-dependent genes. Mediator functions as a bridge to convey information from gene-specific regulatory proteins to the basal RNA polymerase II transcription machinery. Mediator is recruited to promoters by direct interactions with regulatory proteins and serves as a scaffold for the assembly of a functional preinitiation complex with RNA polymerase II and the general transcription factors. Binds to and activates cyclin-dependent kinase cdk-8 that phosphorylates the CTD (C-terminal domain) of the large subunit of RNA polymerase II (RNAp II), which may inhibit the formation of a transcription initiation complex. The protein is Cyclin-C (cic-1) of Caenorhabditis briggsae.